We begin with the raw amino-acid sequence, 427 residues long: Enolase (427 aa).

Position 163 (Gln-163) interacts with (2R)-2-phosphoglycerate. Glu-205 functions as the Proton donor in the catalytic mechanism. Residues Asp-242, Glu-285, and Asp-312 each contribute to the Mg(2+) site. (2R)-2-phosphoglycerate contacts are provided by Lys-337, Arg-366, Ser-367, and Lys-388. The active-site Proton acceptor is Lys-337.

The protein belongs to the enolase family. It depends on Mg(2+) as a cofactor.

It is found in the cytoplasm. It localises to the secreted. Its subcellular location is the cell surface. It catalyses the reaction (2R)-2-phosphoglycerate = phosphoenolpyruvate + H2O. The protein operates within carbohydrate degradation; glycolysis; pyruvate from D-glyceraldehyde 3-phosphate: step 4/5. Functionally, catalyzes the reversible conversion of 2-phosphoglycerate (2-PG) into phosphoenolpyruvate (PEP). It is essential for the degradation of carbohydrates via glycolysis. The chain is Enolase from Herminiimonas arsenicoxydans.